Consider the following 367-residue polypeptide: Biotin--protein ligase 1, chloroplastic (367 aa).

Residues 1-37 constitute a chloroplast transit peptide; the sequence is MEAVRSTTTLSNFHLLNILVLRSLKPLHRLSFSFSAS. Residues 105–289 form the BPL/LPL catalytic domain; sequence IITHRFGRFL…KFEKFFDLFM (185 aa). Biotin-binding positions include 122–124, glutamine 145, 149–151, and lysine 220; these read STH and RGR.

The protein belongs to the biotin--protein ligase family. As to expression, expressed in roots, leaves, stems, flowers, siliques and seeds.

The protein resides in the plastid. It localises to the chloroplast. The protein localises to the cytoplasm. It is found in the cytosol. The enzyme catalyses apo-[3-methylcrotonoyl-CoA:carbon-dioxide ligase (ADP-forming)] + biotin + ATP = holo-[3-methylcrotonoyl-CoA:carbon-dioxide ligase (ADP-forming)] + AMP + diphosphate + H(+). It catalyses the reaction biotin + L-lysyl-[protein] + ATP = N(6)-biotinyl-L-lysyl-[protein] + AMP + diphosphate + H(+). Plays a major role in biotin-dependent carboxylase biotinylation. Catalyzes the addition of biotin to the biotin carboxyl carrier protein (BCCP) subunit of acetyl-CoA carboxylase. Can also biotinylate methylcrotonyl-CoA carboxylase. Is responsible for most, if not all, biotin--protein ligase activity in Arabidopsis. Is essential for plant viability and required for ovule development. This Arabidopsis thaliana (Mouse-ear cress) protein is Biotin--protein ligase 1, chloroplastic.